The sequence spans 734 residues: Photosystem I P700 chlorophyll a apoprotein A2 (734 aa).

The next 8 helical transmembrane spans lie at 46 to 69, 135 to 158, 175 to 199, 273 to 291, 330 to 353, 369 to 395, 417 to 439, and 517 to 535; these read IFASHFGQLAIIFLWTSGNLFHVA, LYTGALFLLFLSAISLIAGRFHLQ, LDHHLSGLFGVSSLAWTGHLVHVAI, IAHHHLAIAFVFFIAGHMY, LHFQLGLALASLGVITSLVAQHMY, AALYTHHQYIAGFIMTGAFAHGAIFFI, AIISHLSWASLFLGFHTLGLYVH, and FLVHHAIALGLHTTTLILV. 2 residues coordinate [4Fe-4S] cluster: C559 and C568. 2 helical membrane passes run 575 to 596 and 643 to 665; these read AFYLAVFWMLNTIGWVTFYWHW and LSVWAWMFLFGHLVWATGFMFLI. 3 residues coordinate chlorophyll a: H654, M662, and Y670. Residue W671 participates in phylloquinone binding. Residues 707 to 727 traverse the membrane as a helical segment; the sequence is LVGLAHFSVGYIFTYAAFLIA.

It belongs to the PsaA/PsaB family. As to quaternary structure, the PsaA/B heterodimer binds the P700 chlorophyll special pair and subsequent electron acceptors. PSI consists of a core antenna complex that captures photons, and an electron transfer chain that converts photonic excitation into a charge separation. The eukaryotic PSI reaction center is composed of at least 11 subunits. P700 is a chlorophyll a/chlorophyll a' dimer, A0 is one or more chlorophyll a, A1 is one or both phylloquinones and FX is a shared 4Fe-4S iron-sulfur center. serves as cofactor.

It is found in the plastid. Its subcellular location is the chloroplast thylakoid membrane. It catalyses the reaction reduced [plastocyanin] + hnu + oxidized [2Fe-2S]-[ferredoxin] = oxidized [plastocyanin] + reduced [2Fe-2S]-[ferredoxin]. Its function is as follows. PsaA and PsaB bind P700, the primary electron donor of photosystem I (PSI), as well as the electron acceptors A0, A1 and FX. PSI is a plastocyanin-ferredoxin oxidoreductase, converting photonic excitation into a charge separation, which transfers an electron from the donor P700 chlorophyll pair to the spectroscopically characterized acceptors A0, A1, FX, FA and FB in turn. Oxidized P700 is reduced on the lumenal side of the thylakoid membrane by plastocyanin. In Cycas taitungensis (Prince sago), this protein is Photosystem I P700 chlorophyll a apoprotein A2.